The chain runs to 409 residues: tRNA-specific 2-thiouridylase MnmA (409 aa).

ATP is bound by residues 40 to 47 (GLSGGVDS) and leucine 66. The Nucleophile role is filled by cysteine 127. Cysteine 127 and cysteine 237 are joined by a disulfide. Glycine 152 contributes to the ATP binding site. Positions 187–189 (KDQ) are interaction with tRNA. The active-site Cysteine persulfide intermediate is cysteine 237. The segment at 342-343 (RY) is interaction with tRNA.

This sequence belongs to the MnmA/TRMU family.

It is found in the cytoplasm. It carries out the reaction S-sulfanyl-L-cysteinyl-[protein] + uridine(34) in tRNA + AH2 + ATP = 2-thiouridine(34) in tRNA + L-cysteinyl-[protein] + A + AMP + diphosphate + H(+). Functionally, catalyzes the 2-thiolation of uridine at the wobble position (U34) of tRNA, leading to the formation of s(2)U34. In Prochlorococcus marinus (strain MIT 9313), this protein is tRNA-specific 2-thiouridylase MnmA.